The chain runs to 404 residues: Druantia protein DruA (404 aa).

It localises to the cytoplasm. In terms of biological role, component of antiviral defense system Druantia type I, composed of DruA, DruB, DruC, DruD and DruE. Expression of Druantia in E.coli (strain MG1655) confers resistance to phage lambda, SECphi18, SECphi27 and T4. This is Druantia protein DruA from Escherichia coli (strain UMEA 4076-1).